The chain runs to 152 residues: 6,7-dimethyl-8-ribityllumazine synthase (152 aa).

5-amino-6-(D-ribitylamino)uracil is bound by residues phenylalanine 18, 49–51 (ALE), and 75–77 (CVI). Residue 80–81 (ET) coordinates (2S)-2-hydroxy-3-oxobutyl phosphate. The Proton donor role is filled by histidine 83. Residue asparagine 108 coordinates 5-amino-6-(D-ribitylamino)uracil. Arginine 122 serves as a coordination point for (2S)-2-hydroxy-3-oxobutyl phosphate.

It belongs to the DMRL synthase family.

It carries out the reaction (2S)-2-hydroxy-3-oxobutyl phosphate + 5-amino-6-(D-ribitylamino)uracil = 6,7-dimethyl-8-(1-D-ribityl)lumazine + phosphate + 2 H2O + H(+). It functions in the pathway cofactor biosynthesis; riboflavin biosynthesis; riboflavin from 2-hydroxy-3-oxobutyl phosphate and 5-amino-6-(D-ribitylamino)uracil: step 1/2. Its function is as follows. Catalyzes the formation of 6,7-dimethyl-8-ribityllumazine by condensation of 5-amino-6-(D-ribitylamino)uracil with 3,4-dihydroxy-2-butanone 4-phosphate. This is the penultimate step in the biosynthesis of riboflavin. The chain is 6,7-dimethyl-8-ribityllumazine synthase from Bartonella bacilliformis (strain ATCC 35685 / KC583 / Herrer 020/F12,63).